A 157-amino-acid chain; its full sequence is Ribosome maturation factor RimP (157 aa).

It belongs to the RimP family.

It localises to the cytoplasm. Functionally, required for maturation of 30S ribosomal subunits. The protein is Ribosome maturation factor RimP of Lactococcus lactis subsp. cremoris (strain MG1363).